The primary structure comprises 1414 residues: DNA-directed RNA polymerase subunit beta' (1414 aa).

Zn(2+)-binding residues include Cys-72, Cys-74, Cys-87, and Cys-90. Mg(2+) contacts are provided by Asp-463, Asp-465, and Asp-467. Positions 811, 885, 892, and 895 each coordinate Zn(2+).

This sequence belongs to the RNA polymerase beta' chain family. In terms of assembly, the RNAP catalytic core consists of 2 alpha, 1 beta, 1 beta' and 1 omega subunit. When a sigma factor is associated with the core the holoenzyme is formed, which can initiate transcription. Mg(2+) serves as cofactor. Zn(2+) is required as a cofactor.

It catalyses the reaction RNA(n) + a ribonucleoside 5'-triphosphate = RNA(n+1) + diphosphate. Functionally, DNA-dependent RNA polymerase catalyzes the transcription of DNA into RNA using the four ribonucleoside triphosphates as substrates. This chain is DNA-directed RNA polymerase subunit beta', found in Roseobacter denitrificans (strain ATCC 33942 / OCh 114) (Erythrobacter sp. (strain OCh 114)).